The following is a 105-amino-acid chain: Large ribosomal subunit protein uL22 (105 aa).

The protein belongs to the universal ribosomal protein uL22 family. In terms of assembly, part of the 50S ribosomal subunit.

This protein binds specifically to 23S rRNA; its binding is stimulated by other ribosomal proteins, e.g. L4, L17, and L20. It is important during the early stages of 50S assembly. It makes multiple contacts with different domains of the 23S rRNA in the assembled 50S subunit and ribosome. Functionally, the globular domain of the protein is located near the polypeptide exit tunnel on the outside of the subunit, while an extended beta-hairpin is found that lines the wall of the exit tunnel in the center of the 70S ribosome. This chain is Large ribosomal subunit protein uL22, found in Sulfurimonas denitrificans (strain ATCC 33889 / DSM 1251) (Thiomicrospira denitrificans (strain ATCC 33889 / DSM 1251)).